Consider the following 92-residue polypeptide: Ferredoxin-like protein in nif region (92 aa).

4Fe-4S ferredoxin-type domains lie at 2-28 (ALKIVESCVNCWACVDVCPSEAISLAG) and 29-65 (PHFEISASKCTECDGDYAEKQCASICPVEGAILLADG). [4Fe-4S] cluster is bound by residues Cys9, Cys12, Cys15, Cys19, Cys38, Cys41, Cys50, and Cys54.

It depends on [4Fe-4S] cluster as a cofactor.

Ferredoxins are iron-sulfur proteins that transfer electrons in a wide variety of metabolic reactions. This Azotobacter vinelandii protein is Ferredoxin-like protein in nif region.